The chain runs to 929 residues: Bifunctional uridylyltransferase/uridylyl-removing enzyme (929 aa).

A uridylyltransferase region spans residues 1–379 (MSPSRPAADE…RPAAKRRRVP (379 aa)). A uridylyl-removing region spans residues 380 to 735 (ESDDFVIDNN…VGFDEARAVT (356 aa)). One can recognise an HD domain in the interval 495–618 (VDEHLIRCVG…VETVEQMKML (124 aa)). ACT domains lie at 736–818 (ELTI…AVAR) and 849–929 (VIEV…KPAA).

This sequence belongs to the GlnD family. Mg(2+) serves as cofactor.

The catalysed reaction is [protein-PII]-L-tyrosine + UTP = [protein-PII]-uridylyl-L-tyrosine + diphosphate. The enzyme catalyses [protein-PII]-uridylyl-L-tyrosine + H2O = [protein-PII]-L-tyrosine + UMP + H(+). Uridylyltransferase (UTase) activity is inhibited by glutamine, while glutamine activates uridylyl-removing (UR) activity. In terms of biological role, modifies, by uridylylation and deuridylylation, the PII regulatory proteins (GlnB and homologs), in response to the nitrogen status of the cell that GlnD senses through the glutamine level. Under low glutamine levels, catalyzes the conversion of the PII proteins and UTP to PII-UMP and PPi, while under higher glutamine levels, GlnD hydrolyzes PII-UMP to PII and UMP (deuridylylation). Thus, controls uridylylation state and activity of the PII proteins, and plays an important role in the regulation of nitrogen fixation and metabolism. This chain is Bifunctional uridylyltransferase/uridylyl-removing enzyme, found in Rhodopseudomonas palustris (strain ATCC BAA-98 / CGA009).